The sequence spans 403 residues: Forkhead box protein Q1 (403 aa).

Disordered regions lie at residues 1–75 (MKLE…PGAE) and 94–116 (GAAGPGAGGAGSGEGARSKPYTR). The segment covering 32–48 (LSAAGDDSLGSDGDCAA) has biased composition (low complexity). Over residues 96–107 (AGPGAGGAGSGE) the composition is skewed to gly residues. Positions 119–214 (KPPYSYIALI…ADGVFRRRRK (96 aa)) form a DNA-binding region, fork-head. The segment at 216-266 (LSHRAPVPAPGLRPEEAPGLPAAPPPAPAAPASPRMRSPARQEERASPAGK) is disordered. The span at 236–246 (PAAPPPAPAAP) shows a compositional bias: pro residues.

Expressed predominantly in the stomach, trachea, bladder and salivary gland.

Its subcellular location is the nucleus. Functionally, plays a role in hair follicle differentiation. In Homo sapiens (Human), this protein is Forkhead box protein Q1 (FOXQ1).